We begin with the raw amino-acid sequence, 597 residues long: tRNA uridine 5-carboxymethylaminomethyl modification enzyme MnmG (597 aa).

FAD is bound at residue 10 to 15 (GGGHAG). Position 267–281 (267–281 (GPRYCPSIEDKVVRF)) interacts with NAD(+).

The protein belongs to the MnmG family. Homodimer. Heterotetramer of two MnmE and two MnmG subunits. FAD is required as a cofactor.

It localises to the cytoplasm. NAD-binding protein involved in the addition of a carboxymethylaminomethyl (cmnm) group at the wobble position (U34) of certain tRNAs, forming tRNA-cmnm(5)s(2)U34. The sequence is that of tRNA uridine 5-carboxymethylaminomethyl modification enzyme MnmG from Thermus thermophilus (strain ATCC 27634 / DSM 579 / HB8).